Here is a 123-residue protein sequence, read N- to C-terminus: Polyadenylate-binding protein-interacting protein 2B (123 aa).

At Met1 the chain carries N-acetylmethionine. Residues 1-13 (MNGSNMANTSPSV) show a composition bias toward polar residues. Disordered regions lie at residues 1–30 (MNGSNMANTSPSVKSKEDQGLSGHDEKENP) and 91–123 (NGLSVSEGHDSEDILSKSNLNPDAKEFIPGEKY). Composition is skewed to basic and acidic residues over residues 14 to 30 (KSKEDQGLSGHDEKENP) and 113 to 123 (DAKEFIPGEKY).

It belongs to the PAIP2 family. In terms of assembly, interacts (via central acidic portion and C-terminus) with PABPC1 (via the second and third RRM domains and the C-terminus). In terms of processing, ubiquitinated in vitro. In terms of tissue distribution, expressed in brain, cervix, heart, liver, ovary, kidney, prostate and testis.

In terms of biological role, inhibits translation of capped and polyadenylated mRNAs by displacing PABPC1 from the poly(A) tail. The sequence is that of Polyadenylate-binding protein-interacting protein 2B (PAIP2B) from Homo sapiens (Human).